We begin with the raw amino-acid sequence, 683 residues long: DNA ligase (683 aa).

Residues 43–47, 92–93, and Glu-125 each bind NAD(+); these read DAEYD and SL. Catalysis depends on Lys-127, which acts as the N6-AMP-lysine intermediate. Arg-148, Glu-185, Lys-303, and Lys-327 together coordinate NAD(+). Cys-421, Cys-424, Cys-439, and Cys-445 together coordinate Zn(2+). The BRCT domain maps to 604–683; it reads IADNPLKGKN…QEFIALTGEN (80 aa).

Belongs to the NAD-dependent DNA ligase family. LigA subfamily. Mg(2+) is required as a cofactor. The cofactor is Mn(2+).

It carries out the reaction NAD(+) + (deoxyribonucleotide)n-3'-hydroxyl + 5'-phospho-(deoxyribonucleotide)m = (deoxyribonucleotide)n+m + AMP + beta-nicotinamide D-nucleotide.. In terms of biological role, DNA ligase that catalyzes the formation of phosphodiester linkages between 5'-phosphoryl and 3'-hydroxyl groups in double-stranded DNA using NAD as a coenzyme and as the energy source for the reaction. It is essential for DNA replication and repair of damaged DNA. The protein is DNA ligase of Actinobacillus pleuropneumoniae serotype 5b (strain L20).